Consider the following 105-residue polypeptide: uncharacterized protein (105 aa).

Residues 81–105 (NNNNKTITVDNNNNNNNNNNNNNNK) form a disordered region.

This is an uncharacterized protein from Dictyostelium discoideum (Social amoeba).